The following is a 209-amino-acid chain: Bcl-2 homologous antagonist/killer (209 aa).

Positions 1–28 are disordered; it reads MASGQGPGPPKVGCDESPSPSEQQVAQD. At Ala-2 the chain carries N-acetylalanine. Residues 18-27 show a composition bias toward polar residues; the sequence is PSPSEQQVAQ. The short motif at 72-86 is the BH3 element; that stretch reads VGRQLALIGDDINRR. Residues 115-134 carry the BH1 motif; sequence SLFKSGISWGRVVALLGFGY. Residues Asp-158 and His-162 each contribute to the Zn(2+) site. The short motif at 167–182 is the BH2 element; the sequence is RWIAQRGGWVAALNFR. The chain crosses the membrane as a helical span at residues 186–203; it reads ILTVMVIFGVVLLGQFVV.

The protein belongs to the Bcl-2 family. In terms of assembly, homodimer. Formation of the homodimer is zinc-dependent. Forms heterodimers with BCL2 and BCL2L1 isoform Bcl-X(L). Forms heterooligomers with BAX. Interacts with BCL2A1. Interacts withRTL10/BOP. Interacts with VDAC1. Interacts with GIMAP3/IAN4 and GIMAP5/IAN5. (Microbial infection) Interacts with gamma-herpesvirus 68 protein vBCL2. In terms of tissue distribution, widely expressed.

It localises to the mitochondrion outer membrane. In terms of biological role, in the presence of an appropriate stimulus, accelerates programmed cell death by binding to, and antagonizing the anti-apoptotic action of BCL2. The chain is Bcl-2 homologous antagonist/killer (Bak1) from Mus musculus (Mouse).